Reading from the N-terminus, the 398-residue chain is Carbamoyl phosphate synthase small chain (398 aa).

CPSase stretches follow at residues 1 to 205 (MTQT…TNDA) and 1 to 207 (MTQT…DACN). L-glutamine contacts are provided by serine 60, glycine 257, and glycine 259. The Glutamine amidotransferase type-1 domain maps to 209–397 (HIVAIDYGIK…FNLIMDYKRT (189 aa)). Residue cysteine 286 is the Nucleophile of the active site. The L-glutamine site is built by leucine 287, glutamine 290, asparagine 328, glycine 330, and phenylalanine 331. Catalysis depends on residues histidine 370 and glutamate 372.

This sequence belongs to the CarA family. In terms of assembly, composed of two chains; the small (or glutamine) chain promotes the hydrolysis of glutamine to ammonia, which is used by the large (or ammonia) chain to synthesize carbamoyl phosphate. Tetramer of heterodimers (alpha,beta)4.

The catalysed reaction is hydrogencarbonate + L-glutamine + 2 ATP + H2O = carbamoyl phosphate + L-glutamate + 2 ADP + phosphate + 2 H(+). It carries out the reaction L-glutamine + H2O = L-glutamate + NH4(+). The protein operates within amino-acid biosynthesis; L-arginine biosynthesis; carbamoyl phosphate from bicarbonate: step 1/1. It participates in pyrimidine metabolism; UMP biosynthesis via de novo pathway; (S)-dihydroorotate from bicarbonate: step 1/3. Small subunit of the glutamine-dependent carbamoyl phosphate synthetase (CPSase). CPSase catalyzes the formation of carbamoyl phosphate from the ammonia moiety of glutamine, carbonate, and phosphate donated by ATP, constituting the first step of 2 biosynthetic pathways, one leading to arginine and/or urea and the other to pyrimidine nucleotides. The small subunit (glutamine amidotransferase) binds and cleaves glutamine to supply the large subunit with the substrate ammonia. The protein is Carbamoyl phosphate synthase small chain of Bartonella quintana (strain Toulouse) (Rochalimaea quintana).